The sequence spans 314 residues: Methionyl-tRNA formyltransferase (314 aa).

Residue 113 to 116 participates in (6S)-5,6,7,8-tetrahydrofolate binding; sequence SLLP.

Belongs to the Fmt family.

It catalyses the reaction L-methionyl-tRNA(fMet) + (6R)-10-formyltetrahydrofolate = N-formyl-L-methionyl-tRNA(fMet) + (6S)-5,6,7,8-tetrahydrofolate + H(+). Attaches a formyl group to the free amino group of methionyl-tRNA(fMet). The formyl group appears to play a dual role in the initiator identity of N-formylmethionyl-tRNA by promoting its recognition by IF2 and preventing the misappropriation of this tRNA by the elongation apparatus. The polypeptide is Methionyl-tRNA formyltransferase (Serratia proteamaculans (strain 568)).